Consider the following 263-residue polypeptide: Indolethylamine N-methyltransferase (263 aa).

Lys13 carries the N6-succinyllysine modification. S-adenosyl-L-methionine is bound by residues Tyr20, Tyr25, Gly63, Tyr69, 85–87, and Asn90; that span reads DFT. Position 96 is an N6-succinyllysine (Lys96). S-adenosyl-L-methionine contacts are provided by residues 142 to 143 and Leu163; that span reads DV.

The protein belongs to the class I-like SAM-binding methyltransferase superfamily. NNMT/PNMT/TEMT family. As to quaternary structure, monomer. Widely expressed. The highest levels were in thyroid, adrenal gland, adult and fetal lung. Intermediate levels in heart, placenta, skeletal muscle, testis, small intestine, pancreas, stomach, spinal cord, lymph node and trachea. Very low levels in adult and fetal kidney and liver, in adult spleen, thymus, ovary, colon and bone marrow. Not expressed in peripheral blood leukocytes and brain.

It localises to the cytoplasm. The catalysed reaction is a tertiary amine + S-adenosyl-L-methionine = a methylated tertiary amine + S-adenosyl-L-homocysteine + H(+). It carries out the reaction a secondary amine + S-adenosyl-L-methionine = a methylated secondary amine + S-adenosyl-L-homocysteine + H(+). It catalyses the reaction a primary amine + S-adenosyl-L-methionine = a methylated primary amine + S-adenosyl-L-homocysteine + H(+). The enzyme catalyses dimethyl sulfide + S-adenosyl-L-methionine = trimethylsulfonium + S-adenosyl-L-homocysteine. Functions as a thioether S-methyltransferase and is active with a variety of thioethers and the corresponding selenium and tellurium compounds, including 3-methylthiopropionaldehyde, dimethyl selenide, dimethyl telluride, 2-methylthioethylamine, 2-methylthioethanol, methyl-n-propyl sulfide and diethyl sulfide. Plays an important role in the detoxification of selenium compounds. Catalyzes the N-methylation of tryptamine and structurally related compounds. In Homo sapiens (Human), this protein is Indolethylamine N-methyltransferase (INMT).